The chain runs to 232 residues: Ribosomal RNA small subunit methyltransferase G (232 aa).

Residues Gly93, Leu98, 144–145, and Arg163 contribute to the S-adenosyl-L-methionine site; that span reads VE.

It belongs to the methyltransferase superfamily. RNA methyltransferase RsmG family.

The protein localises to the cytoplasm. It catalyses the reaction guanosine(527) in 16S rRNA + S-adenosyl-L-methionine = N(7)-methylguanosine(527) in 16S rRNA + S-adenosyl-L-homocysteine. Its function is as follows. Specifically methylates the N7 position of guanine in position 527 of 16S rRNA. This chain is Ribosomal RNA small subunit methyltransferase G, found in Burkholderia pseudomallei (strain 668).